Here is a 382-residue protein sequence, read N- to C-terminus: Cell division protein FtsZ (382 aa).

Residues 21–25 (GGGNN), 108–110 (GTG), glutamate 139, arginine 143, and aspartate 187 contribute to the GTP site. The disordered stretch occupies residues 320-382 (KDVTKPQRPS…TFLRNRNKRG (63 aa)). Over residues 326-341 (QRPSLNQSIKTHNQSV) the composition is skewed to polar residues. The span at 342 to 351 (PKREPKREEP) shows a compositional bias: basic and acidic residues. The span at 352 to 365 (QQQNTVSRHTSQPA) shows a compositional bias: polar residues.

This sequence belongs to the FtsZ family. In terms of assembly, homodimer. Polymerizes to form a dynamic ring structure in a strictly GTP-dependent manner. Interacts directly with several other division proteins. Interacts with FtsA. Interacts with Phi29 DNA replication protein 1. Interacts with the cell division inhibitor MciZ.

It is found in the cytoplasm. Its activity is regulated as follows. During sporulation, is negatively regulated by MciZ, which binds to FtsZ and inhibits its polymerization and the formation of the Z ring. Essential cell division protein that forms a contractile ring structure (Z ring) at the future cell division site. The regulation of the ring assembly controls the timing and the location of cell division. One of the functions of the FtsZ ring is to recruit other cell division proteins to the septum to produce a new cell wall between the dividing cells. Binds GTP and shows GTPase activity. In Bacillus subtilis (strain 168), this protein is Cell division protein FtsZ.